The following is a 343-amino-acid chain: MTTPLLLRAARGESVERPPIWLMRQAGRYMKVYRDLRDRYPSFRQRSEIPELAIEISLQPFRAFAPDGVILFSDILTPLPGIGIPFDIVESKGPIIDPPIRTLEQVQHLHPLEPEAACPFIRPILATLRQEVGDRAAVLGFAGAPWTLAAYAIEGKSSKDYIQIKTMAYREPDLLHKFLNHLATAIADYLCYQIDCGAQVVQLFDSWAGQLSRQDYDTFAFPYQKQVIQQVKAVYPDVPIILYINGSAAIVDRMAATGVDIVSLDWTVDLGTIRQQFPPSVGLQGNLDPVILFAPQPVLKERSLAIIEAGRKGKYIFNLGHGVLQGTPEENVAFLFDWVKSLA.

Substrate contacts are provided by residues 24–28 (RQAGR), phenylalanine 43, aspartate 74, tyrosine 151, serine 206, and histidine 321.

It belongs to the uroporphyrinogen decarboxylase family. As to quaternary structure, homodimer.

Its subcellular location is the cytoplasm. It carries out the reaction uroporphyrinogen III + 4 H(+) = coproporphyrinogen III + 4 CO2. It functions in the pathway porphyrin-containing compound metabolism; protoporphyrin-IX biosynthesis; coproporphyrinogen-III from 5-aminolevulinate: step 4/4. Functionally, catalyzes the decarboxylation of four acetate groups of uroporphyrinogen-III to yield coproporphyrinogen-III. This is Uroporphyrinogen decarboxylase from Thermosynechococcus vestitus (strain NIES-2133 / IAM M-273 / BP-1).